The chain runs to 264 residues: Thymidylate synthase (264 aa).

Arg21 serves as a coordination point for dUMP. His51 provides a ligand contact to (6R)-5,10-methylene-5,6,7,8-tetrahydrofolate. The Nucleophile role is filled by Cys146. Residues Arg166 to Asp169, Asn177, and His207 to Tyr209 each bind dUMP. Asp169 is a binding site for (6R)-5,10-methylene-5,6,7,8-tetrahydrofolate. Ala263 contacts (6R)-5,10-methylene-5,6,7,8-tetrahydrofolate.

The protein belongs to the thymidylate synthase family. Bacterial-type ThyA subfamily. Homodimer.

It is found in the cytoplasm. It carries out the reaction dUMP + (6R)-5,10-methylene-5,6,7,8-tetrahydrofolate = 7,8-dihydrofolate + dTMP. It participates in pyrimidine metabolism; dTTP biosynthesis. In terms of biological role, catalyzes the reductive methylation of 2'-deoxyuridine-5'-monophosphate (dUMP) to 2'-deoxythymidine-5'-monophosphate (dTMP) while utilizing 5,10-methylenetetrahydrofolate (mTHF) as the methyl donor and reductant in the reaction, yielding dihydrofolate (DHF) as a by-product. This enzymatic reaction provides an intracellular de novo source of dTMP, an essential precursor for DNA biosynthesis. The sequence is that of Thymidylate synthase from Brucella canis (strain ATCC 23365 / NCTC 10854 / RM-666).